Reading from the N-terminus, the 1541-residue chain is ATP-binding cassette sub-family C member 2 (1541 aa).

At 1–26 the chain is on the extracellular side; the sequence is MDKFCNSTFWDLSLLESPEADLPLCF. Residue Asn-6 is glycosylated (N-linked (GlcNAc...) asparagine). Residues 27 to 47 form a helical membrane-spanning segment; that stretch reads EQTVLVWIPLGFLWLLAPWQL. At 48-67 the chain is on the cytoplasmic side; it reads YSVYRSRTKRSSITKFYLAK. Residues 68–88 traverse the membrane as a helical segment; it reads QVFVVFLLILAAIDLSLALTE. Topologically, residues 89 to 92 are extracellular; the sequence is DTGQ. A helical membrane pass occupies residues 93–113; the sequence is ATVPPVRYTNPILYLCTWLLV. The Cytoplasmic portion of the chain corresponds to 114–125; it reads LAVQHSRQWCVR. The helical transmembrane segment at 126–146 threads the bilayer; it reads KNSWFLSLFWILSVLCGVFQF. Residues 147-164 lie on the Extracellular side of the membrane; that stretch reads QTLIRALLKDSKSNMAYS. Residues 165-185 traverse the membrane as a helical segment; it reads YLFFVSYGFQIVLLILTAFSG. Topologically, residues 186 to 309 are cytoplasmic; that stretch reads PSDSTQTPSV…DYPKSWLIKS (124 aa). 2 positions are modified to phosphoserine: Ser-279 and Ser-281. Residues 310–330 traverse the membrane as a helical segment; it reads LFKTFHVVILKSFILKLIHDL. The region spanning 318–601 is the ABC transmembrane type-1 1 domain; it reads ILKSFILKLI…LPMVTSSILQ (284 aa). Over 331–356 the chain is Extracellular; that stretch reads LVFLNPQLLKLLIGFVKSSNSYVWFG. A helical transmembrane segment spans residues 357–377; it reads YICAILMFAVTLIQSFCLQSY. The Cytoplasmic segment spans residues 378-433; that stretch reads FQHCFVLGMCVRTTVMSSIYKKALTLSNLARKQYTIGETVNLMSVDSQKLMDATNY. A helical membrane pass occupies residues 434–454; it reads MQLVWSSVIQITLSIFFLWRE. The Extracellular portion of the chain corresponds to 455 to 457; the sequence is LGP. A helical membrane pass occupies residues 458-478; that stretch reads SILAGVGVMVLLIPVNGVLAT. The Cytoplasmic segment spans residues 479–540; it reads KIRNIQVQNM…NLLRFGQLQS (62 aa). The helical transmembrane segment at 541 to 561 threads the bilayer; sequence LLIFILQITPILVSVVTFSVY. Residues 562–583 lie on the Extracellular side of the membrane; the sequence is VLVDSANVLNAEKAFTSITLFN. Residues 584-604 form a helical membrane-spanning segment; that stretch reads ILRFPLSMLPMVTSSILQASV. The Cytoplasmic portion of the chain corresponds to 605-967; that stretch reads SVDRLERYLG…VKFSIYLKYL (363 aa). The 225-residue stretch at 633-857 folds into the ABC transporter 1 domain; it reads VKFSEASFTW…KGVFARNWKT (225 aa). Position 667-674 (667-674) interacts with ATP; it reads GTVGSGKS. Disordered regions lie at residues 862-881 and 901-923; these read SGPEGEATVNNDSEAEDDDD and RENSLRRTLSRSSRSSSRRGKSL. Ser-874 is modified (phosphoserine). A compositionally biased stretch (low complexity) spans 906 to 915; that stretch reads RRTLSRSSRS. 2 positions are modified to phosphoserine: Ser-922 and Ser-926. The helical transmembrane segment at 968–988 threads the bilayer; that stretch reads QAVGWWSILFIILFYGLNNVA. One can recognise an ABC transmembrane type-1 2 domain in the interval 975-1260; that stretch reads ILFIILFYGL…LVRMTSEAET (286 aa). The Extracellular portion of the chain corresponds to 989–1029; that stretch reads FIGSNLWLSAWTSDSDNLNGTNNSSSHRDMRIGVFGALGLA. Asn-1007, Asn-1010, and Asn-1011 each carry an N-linked (GlcNAc...) asparagine glycan. Residues 1030-1050 traverse the membrane as a helical segment; that stretch reads QGICLLISTLWSIYACRNASK. Topologically, residues 1051–1093 are cytoplasmic; that stretch reads ALHGQLLTNILRAPMRFFDTTPTGRIVNRFSGDISTVDDLLPQ. The chain crosses the membrane as a helical span at residues 1094-1114; it reads TLRSWMMCFFGIAGTLVMICM. Residue Ala-1115 is a topological domain, extracellular. A helical transmembrane segment spans residues 1116–1136; sequence TPVFAIIIIPLSILYISVQVF. Residues 1137 to 1207 are Cytoplasmic-facing; the sequence is YVATSRQLRR…TSNRWLAIRL (71 aa). The helical transmembrane segment at 1208-1228 threads the bilayer; that stretch reads ELVGNLVVFCSALLLVIYRKT. The Extracellular portion of the chain corresponds to 1229–1230; that stretch reads LT. A helical membrane pass occupies residues 1231-1251; that stretch reads GDVVGFVLSNALNITQTLNWL. Over 1252–1541 the chain is Cytoplasmic; sequence VRMTSEAETN…GIENVNHTEL (290 aa). One can recognise an ABC transporter 2 domain in the interval 1296–1530; the sequence is IQFNNYQVRY…RGSFYLMAKE (235 aa). ATP is bound at residue 1330–1337; it reads GRTGAGKS. Ser-1434 bears the Phosphoserine mark.

The protein belongs to the ABC transporter superfamily. ABCC family. Conjugate transporter (TC 3.A.1.208) subfamily. As to expression, mainly expressed in the liver.

The protein localises to the apical cell membrane. It carries out the reaction an S-substituted glutathione(in) + ATP + H2O = an S-substituted glutathione(out) + ADP + phosphate + H(+). The enzyme catalyses taurolithocholate 3-sulfate(in) + ATP + H2O = taurolithocholate 3-sulfate(out) + ADP + phosphate + H(+). It catalyses the reaction ATP + H2O + xenobioticSide 1 = ADP + phosphate + xenobioticSide 2.. The catalysed reaction is 17beta-estradiol 17-O-(beta-D-glucuronate)(in) + ATP + H2O = 17beta-estradiol 17-O-(beta-D-glucuronate)(out) + ADP + phosphate + H(+). It carries out the reaction leukotriene C4(in) + ATP + H2O = leukotriene C4(out) + ADP + phosphate + H(+). The enzyme catalyses (4Z,15Z)-bilirubin IXalpha C8-beta-D-glucuronoside(in) + ATP + H2O = (4Z,15Z)-bilirubin IXalpha C8-beta-D-glucuronoside(out) + ADP + phosphate + H(+). It catalyses the reaction (4Z,15Z)-bilirubin IXalpha C8,C12-beta-D-bisglucuronoside(in) + ATP + H2O = (4Z,15Z)-bilirubin IXalpha C8,C12-beta-D-bisglucuronoside(out) + ADP + phosphate + H(+). In terms of biological role, ATP-dependent transporter of the ATP-binding cassette (ABC) family that binds and hydrolyzes ATP to enable active transport of various substrates including many drugs, toxicants and endogenous compound across cell membranes. Transports a wide variety of conjugated organic anions such as sulfate-, glucuronide- and glutathione (GSH)-conjugates of endo- and xenobiotics substrates. Mediates hepatobiliary excretion of mono- and bis-glucuronidated bilirubin molecules and therefore play an important role in bilirubin detoxification. Also mediates hepatobiliary excretion of others glucuronide conjugates such as 17beta-estradiol 17-glucosiduronic acid and leukotriene C4. Transports sulfated bile salt such as taurolithocholate sulfate. Transports various anticancer drugs, such as anthracycline, vinca alkaloid and methotrexate and HIV-drugs such as protease inhibitors. The sequence is that of ATP-binding cassette sub-family C member 2 from Rattus norvegicus (Rat).